Reading from the N-terminus, the 278-residue chain is Polyamine aminopropyltransferase (278 aa).

The PABS domain occupies 3-240 (EGWFTEAVED…GWWSATLMVN (238 aa)). Residue Q33 participates in S-methyl-5'-thioadenosine binding. Positions 64 and 88 each coordinate spermidine. S-methyl-5'-thioadenosine-binding positions include E108 and 139 to 140 (DG). D158 (proton acceptor) is an active-site residue. 158–161 (DSTD) provides a ligand contact to spermidine. P165 is a binding site for S-methyl-5'-thioadenosine.

The protein belongs to the spermidine/spermine synthase family. As to quaternary structure, homodimer or homotetramer.

Its subcellular location is the cytoplasm. It carries out the reaction S-adenosyl 3-(methylsulfanyl)propylamine + putrescine = S-methyl-5'-thioadenosine + spermidine + H(+). Its pathway is amine and polyamine biosynthesis; spermidine biosynthesis; spermidine from putrescine: step 1/1. Its function is as follows. Catalyzes the irreversible transfer of a propylamine group from the amino donor S-adenosylmethioninamine (decarboxy-AdoMet) to putrescine (1,4-diaminobutane) to yield spermidine. This chain is Polyamine aminopropyltransferase, found in Halorhodospira halophila (strain DSM 244 / SL1) (Ectothiorhodospira halophila (strain DSM 244 / SL1)).